Here is a 761-residue protein sequence, read N- to C-terminus: Centrosomal protein of 85 kDa (761 aa).

Disordered stretches follow at residues 1 to 33 (MAMQ…TEWQ) and 95 to 117 (PSTL…SAKL). Residues 14 to 33 (ATSPGSNVIQKGSSLGTEWQ) show a composition bias toward polar residues. The residue at position 16 (serine 16) is a Phosphoserine. Residue serine 140 is modified to Phosphoserine. Disordered stretches follow at residues 226–279 (KAPG…GEQS) and 435–472 (KHSE…REKQ). Residues 256 to 432 (GLSKSLSSQV…QLIRESLKVT (177 aa)) form a mediates interaction with NEK2 and is required for its function in the suppression of centrosome disjunction region. 2 coiled-coil regions span residues 333–656 (EHLL…RQAQ) and 723–749 (DVIR…LSDR). The tract at residues 433-475 (LQKHSEEGKKQEERVKGRDKHINNLKKKCQKESEQNREKQQRI) is required for centrosome localization and for its function in the suppression of centrosome disjunction. Basic and acidic residues-rich tracts occupy residues 435–454 (KHSE…DKHI) and 462–472 (QKESEQNREKQ).

The protein belongs to the CEP85 family. Homodimer. Interacts with STIL (via N-terminus); this interaction is essential for robust PLK4 activation and efficient centriole assembly and for PLK4-dependent cell migration. Interacts with PLK4; required for CEP85 to be able to drive centriole duplication and cell migration.

Its subcellular location is the cytoplasm. It localises to the cytoskeleton. The protein resides in the microtubule organizing center. The protein localises to the centrosome. It is found in the spindle pole. Its subcellular location is the nucleus. It localises to the nucleolus. The protein resides in the centriole. The protein localises to the cell cortex. Acts as a regulator of centriole duplication through a direct interaction with STIL, a key factor involved in the early steps of centriole formation. The CEP85-STIL protein complex acts as a modulator of PLK4-driven cytoskeletal rearrangements and directional cell motility. Acts as a negative regulator of NEK2 to maintain the centrosome integrity in interphase. Suppresses centrosome disjunction by inhibiting NEK2 kinase activity. The chain is Centrosomal protein of 85 kDa (Cep85) from Mus musculus (Mouse).